A 141-amino-acid chain; its full sequence is Oleosin L (141 aa).

Transmembrane regions (helical) follow at residues 23-43, 46-66, and 74-94; these read VLFF…LALA, VVLM…ILPV, and AAAF…LIWV. Residues 54-65 carry the Proline-knot motif; it reads PVFLLLSPVILP.

It belongs to the oleosin family. Expressed in megagametophytes (at protein level).

It localises to the lipid droplet. The protein localises to the membrane. In Pinus massoniana (Chinese red pine), this protein is Oleosin L.